The following is a 396-amino-acid chain: Elongation factor Tu (396 aa).

In terms of domain architecture, tr-type G spans 10–206 (KPHVNVGTIG…ALDSYIPTPE (197 aa)). The interval 19 to 26 (GHVDHGKT) is G1. Residue 19–26 (GHVDHGKT) coordinates GTP. Threonine 26 lines the Mg(2+) pocket. The segment at 60 to 64 (GITIN) is G2. The G3 stretch occupies residues 81–84 (DCPG). GTP is bound by residues 81–85 (DCPGH) and 136–139 (NKCD). The tract at residues 136–139 (NKCD) is G4. A G5 region spans residues 174–176 (SAK).

Belongs to the TRAFAC class translation factor GTPase superfamily. Classic translation factor GTPase family. EF-Tu/EF-1A subfamily. In terms of assembly, monomer.

The protein resides in the cytoplasm. It catalyses the reaction GTP + H2O = GDP + phosphate + H(+). In terms of biological role, GTP hydrolase that promotes the GTP-dependent binding of aminoacyl-tRNA to the A-site of ribosomes during protein biosynthesis. This Methylibium petroleiphilum (strain ATCC BAA-1232 / LMG 22953 / PM1) protein is Elongation factor Tu.